We begin with the raw amino-acid sequence, 116 residues long: WRMVWEQNVSTVIMATNTEERKEPKCAKYWPSGDPQSYGDLMVVNLGENHLVDYTIRSFSVQRAQGDSTMSIKRNITQYHFTSWPDFGVPKSPSGILKFLRKIKHSSPTGYGPIVV.

The 116-residue stretch at 1–116 (WRMVWEQNVS…SPTGYGPIVV (116 aa)) folds into the Tyrosine-protein phosphatase domain. Asp-86 contributes to the substrate binding site.

The protein belongs to the protein-tyrosine phosphatase family.

The enzyme catalyses O-phospho-L-tyrosyl-[protein] + H2O = L-tyrosyl-[protein] + phosphate. This is Tyrosine-protein phosphatase 10 (STY-10) from Styela plicata (Wrinkled sea squirt).